The chain runs to 1407 residues: DNA-directed RNA polymerase subunit beta' (1407 aa).

Zn(2+)-binding residues include Cys70, Cys72, Cys85, and Cys88. Positions 460, 462, and 464 each coordinate Mg(2+). Zn(2+) contacts are provided by Cys814, Cys888, Cys895, and Cys898. Residue Lys972 is modified to N6-acetyllysine.

It belongs to the RNA polymerase beta' chain family. The RNAP catalytic core consists of 2 alpha, 1 beta, 1 beta' and 1 omega subunit. When a sigma factor is associated with the core the holoenzyme is formed, which can initiate transcription. Mg(2+) is required as a cofactor. Zn(2+) serves as cofactor.

It catalyses the reaction RNA(n) + a ribonucleoside 5'-triphosphate = RNA(n+1) + diphosphate. DNA-dependent RNA polymerase catalyzes the transcription of DNA into RNA using the four ribonucleoside triphosphates as substrates. The sequence is that of DNA-directed RNA polymerase subunit beta' from Shigella dysenteriae serotype 1 (strain Sd197).